We begin with the raw amino-acid sequence, 288 residues long: Ankyrin repeat and SOCS box protein 8 (288 aa).

Serine 17 carries the phosphoserine modification. 4 ANK repeats span residues glycine 52–alanine 81, tyrosine 85–alanine 113, asparagine 117–alanine 146, and asparagine 150–valine 179. The region spanning glutamine 235–glutamate 288 is the SOCS box domain.

This sequence belongs to the ankyrin SOCS box (ASB) family. Interacts with TBK1; this interaction promotes TBK1 proteasomal degradation. Post-translationally, phosphorylated by TBK1.

Its subcellular location is the cytoplasm. It participates in protein modification; protein ubiquitination. Its function is as follows. May be a substrate-recognition component of a SCF-like ECS (Elongin-Cullin-SOCS-box protein) E3 ubiquitin-protein ligase complex which mediates the ubiquitination and subsequent proteasomal degradation of target proteins. Inhibits IFN-beta production through the IRF3 signaling pathway by targeting TBK1 via 'Lys-48'-linked ubiquitination, leading to its proteasomal degradation. The polypeptide is Ankyrin repeat and SOCS box protein 8 (ASB8) (Pongo abelii (Sumatran orangutan)).